We begin with the raw amino-acid sequence, 184 residues long: Elongation factor P (184 aa).

Belongs to the elongation factor P family.

It is found in the cytoplasm. The protein operates within protein biosynthesis; polypeptide chain elongation. Its function is as follows. Involved in peptide bond synthesis. Stimulates efficient translation and peptide-bond synthesis on native or reconstituted 70S ribosomes in vitro. Probably functions indirectly by altering the affinity of the ribosome for aminoacyl-tRNA, thus increasing their reactivity as acceptors for peptidyl transferase. In Verminephrobacter eiseniae (strain EF01-2), this protein is Elongation factor P.